The chain runs to 450 residues: UDP-N-acetylmuramoylalanine--D-glutamate ligase (450 aa).

119 to 125 (GTNGKTT) is a binding site for ATP.

The protein belongs to the MurCDEF family.

The protein localises to the cytoplasm. The enzyme catalyses UDP-N-acetyl-alpha-D-muramoyl-L-alanine + D-glutamate + ATP = UDP-N-acetyl-alpha-D-muramoyl-L-alanyl-D-glutamate + ADP + phosphate + H(+). The protein operates within cell wall biogenesis; peptidoglycan biosynthesis. Its function is as follows. Cell wall formation. Catalyzes the addition of glutamate to the nucleotide precursor UDP-N-acetylmuramoyl-L-alanine (UMA). This is UDP-N-acetylmuramoylalanine--D-glutamate ligase from Lactococcus lactis subsp. lactis (strain IL1403) (Streptococcus lactis).